A 161-amino-acid polypeptide reads, in one-letter code: Large ribosomal subunit protein uL10 (161 aa).

This sequence belongs to the universal ribosomal protein uL10 family. As to quaternary structure, part of the ribosomal stalk of the 50S ribosomal subunit. The N-terminus interacts with L11 and the large rRNA to form the base of the stalk. The C-terminus forms an elongated spine to which L12 dimers bind in a sequential fashion forming a multimeric L10(L12)X complex.

Functionally, forms part of the ribosomal stalk, playing a central role in the interaction of the ribosome with GTP-bound translation factors. The polypeptide is Large ribosomal subunit protein uL10 (Campylobacter curvus (strain 525.92)).